Here is a 283-residue protein sequence, read N- to C-terminus: Putative pyruvate, phosphate dikinase regulatory protein (283 aa).

Residue 154–161 (GVSRTSKT) coordinates ADP.

Belongs to the pyruvate, phosphate/water dikinase regulatory protein family. PDRP subfamily.

It catalyses the reaction N(tele)-phospho-L-histidyl/L-threonyl-[pyruvate, phosphate dikinase] + ADP = N(tele)-phospho-L-histidyl/O-phospho-L-threonyl-[pyruvate, phosphate dikinase] + AMP + H(+). The enzyme catalyses N(tele)-phospho-L-histidyl/O-phospho-L-threonyl-[pyruvate, phosphate dikinase] + phosphate + H(+) = N(tele)-phospho-L-histidyl/L-threonyl-[pyruvate, phosphate dikinase] + diphosphate. Bifunctional serine/threonine kinase and phosphorylase involved in the regulation of the pyruvate, phosphate dikinase (PPDK) by catalyzing its phosphorylation/dephosphorylation. The polypeptide is Putative pyruvate, phosphate dikinase regulatory protein (Afipia carboxidovorans (strain ATCC 49405 / DSM 1227 / KCTC 32145 / OM5) (Oligotropha carboxidovorans)).